A 179-amino-acid chain; its full sequence is Large ribosomal subunit protein uL5 (179 aa).

This sequence belongs to the universal ribosomal protein uL5 family. In terms of assembly, part of the 50S ribosomal subunit; part of the 5S rRNA/L5/L18/L25 subcomplex. Contacts the 5S rRNA and the P site tRNA. Forms a bridge to the 30S subunit in the 70S ribosome.

Functionally, this is one of the proteins that bind and probably mediate the attachment of the 5S RNA into the large ribosomal subunit, where it forms part of the central protuberance. In the 70S ribosome it contacts protein S13 of the 30S subunit (bridge B1b), connecting the 2 subunits; this bridge is implicated in subunit movement. Contacts the P site tRNA; the 5S rRNA and some of its associated proteins might help stabilize positioning of ribosome-bound tRNAs. This Photobacterium profundum (strain SS9) protein is Large ribosomal subunit protein uL5.